The following is a 236-amino-acid chain: Purine nucleoside phosphorylase DeoD-type (236 aa).

His-5 serves as a coordination point for a purine D-ribonucleoside. Phosphate is bound by residues Gly-21, Arg-25, Arg-44, and 88–91 (RVGT). Residues 180–182 (EME) and 204–205 (SD) contribute to the a purine D-ribonucleoside site. The Proton donor role is filled by Asp-205.

This sequence belongs to the PNP/UDP phosphorylase family. Homohexamer; trimer of homodimers.

It catalyses the reaction a purine D-ribonucleoside + phosphate = a purine nucleobase + alpha-D-ribose 1-phosphate. It carries out the reaction a purine 2'-deoxy-D-ribonucleoside + phosphate = a purine nucleobase + 2-deoxy-alpha-D-ribose 1-phosphate. In terms of biological role, catalyzes the reversible phosphorolytic breakdown of the N-glycosidic bond in the beta-(deoxy)ribonucleoside molecules, with the formation of the corresponding free purine bases and pentose-1-phosphate. This Shewanella baltica (strain OS223) protein is Purine nucleoside phosphorylase DeoD-type.